The primary structure comprises 526 residues: 2-isopropylmalate synthase (526 aa).

In terms of domain architecture, Pyruvate carboxyltransferase spans 5–267 (VIIFDTTLRD…HTGIRHQEIY (263 aa)). Mn(2+)-binding residues include D14, H202, H204, and N238. Residues 393–526 (RLEYFSVQSG…VPSISTSSTH (134 aa)) form a regulatory domain region.

Belongs to the alpha-IPM synthase/homocitrate synthase family. LeuA type 1 subfamily. In terms of assembly, homodimer. The cofactor is Mn(2+).

The protein resides in the cytoplasm. It carries out the reaction 3-methyl-2-oxobutanoate + acetyl-CoA + H2O = (2S)-2-isopropylmalate + CoA + H(+). The protein operates within amino-acid biosynthesis; L-leucine biosynthesis; L-leucine from 3-methyl-2-oxobutanoate: step 1/4. In terms of biological role, catalyzes the condensation of the acetyl group of acetyl-CoA with 3-methyl-2-oxobutanoate (2-ketoisovalerate) to form 3-carboxy-3-hydroxy-4-methylpentanoate (2-isopropylmalate). This chain is 2-isopropylmalate synthase, found in Edwardsiella ictaluri (strain 93-146).